We begin with the raw amino-acid sequence, 310 residues long: Porphobilinogen deaminase (310 aa).

Residue C242 is modified to S-(dipyrrolylmethanemethyl)cysteine.

It belongs to the HMBS family. Monomer. The cofactor is dipyrromethane.

The catalysed reaction is 4 porphobilinogen + H2O = hydroxymethylbilane + 4 NH4(+). It functions in the pathway porphyrin-containing compound metabolism; protoporphyrin-IX biosynthesis; coproporphyrinogen-III from 5-aminolevulinate: step 2/4. Functionally, tetrapolymerization of the monopyrrole PBG into the hydroxymethylbilane pre-uroporphyrinogen in several discrete steps. In Shewanella baltica (strain OS223), this protein is Porphobilinogen deaminase.